The chain runs to 147 residues: Lysozyme C (147 aa).

The first 17 residues, 1 to 17 (MRSLLILVLCFLPLAAP), serve as a signal peptide directing secretion. The region spanning 19–147 (KVYGRCELAA…VNVWIRGCRL (129 aa)) is the C-type lysozyme domain. 4 disulfides stabilise this stretch: C24/C145, C48/C133, C82/C98, and C94/C112. Active-site residues include E53 and D70.

Belongs to the glycosyl hydrolase 22 family. Monomer. In terms of processing, by an evolutionary shift in the site of proteolytic cleavage of prelysozyme, Gly-18 became the N-terminal residue of the mature protein instead of being the C-terminal residue of the signal sequence as in other birds.

The protein localises to the secreted. It carries out the reaction Hydrolysis of (1-&gt;4)-beta-linkages between N-acetylmuramic acid and N-acetyl-D-glucosamine residues in a peptidoglycan and between N-acetyl-D-glucosamine residues in chitodextrins.. In terms of biological role, lysozymes have primarily a bacteriolytic function; those in tissues and body fluids are associated with the monocyte-macrophage system and enhance the activity of immunoagents. This is Lysozyme C (LYZ) from Phasianus colchicus colchicus (Black-necked pheasant).